Reading from the N-terminus, the 124-residue chain is Prefoldin subunit beta (124 aa).

It belongs to the prefoldin subunit beta family. As to quaternary structure, heterohexamer of two alpha and four beta subunits.

The protein localises to the cytoplasm. Its function is as follows. Molecular chaperone capable of stabilizing a range of proteins. Seems to fulfill an ATP-independent, HSP70-like function in archaeal de novo protein folding. This is Prefoldin subunit beta (pfdB) from Thermoplasma acidophilum (strain ATCC 25905 / DSM 1728 / JCM 9062 / NBRC 15155 / AMRC-C165).